Consider the following 257-residue polypeptide: Tryptophan synthase alpha chain (257 aa).

Residues E47 and D58 each act as proton acceptor in the active site.

The protein belongs to the TrpA family. Tetramer of two alpha and two beta chains.

The catalysed reaction is (1S,2R)-1-C-(indol-3-yl)glycerol 3-phosphate + L-serine = D-glyceraldehyde 3-phosphate + L-tryptophan + H2O. The protein operates within amino-acid biosynthesis; L-tryptophan biosynthesis; L-tryptophan from chorismate: step 5/5. In terms of biological role, the alpha subunit is responsible for the aldol cleavage of indoleglycerol phosphate to indole and glyceraldehyde 3-phosphate. This chain is Tryptophan synthase alpha chain, found in Listeria monocytogenes serotype 4b (strain F2365).